The chain runs to 477 residues: Myosin-binding protein H (477 aa).

Residues 1 to 73 are disordered; that stretch reads MMEKNTSEGP…APPSEDVPSA (73 aa). Residues T6 and T26 each carry the phosphothreonine modification. The region spanning 73–168 is the Fibronectin type-III 1 domain; it reads APLLLTLDDV…LDQPIHIREN (96 aa). One can recognise an Ig-like C2-type 1 domain in the interval 172–260; the sequence is PKIRVPRHLR…EDLEAKAVID (89 aa). A Fibronectin type-III 2 domain is found at 269-364; that stretch reads PPSSIRLLDV…TKELAHIQKA (96 aa). Positions 382–466 constitute an Ig-like C2-type 2 domain; that stretch reads PSFTQPLADH…INVLGEASVD (85 aa).

This sequence belongs to the immunoglobulin superfamily. MyBP family. As to expression, mainly expressed in the skeletal muscle. Slightly expressed in the left atrium and arteria mammaria interna.

Binds to myosin; probably involved in interaction with thick myofilaments in the A-band. The polypeptide is Myosin-binding protein H (MYBPH) (Homo sapiens (Human)).